Here is a 165-residue protein sequence, read N- to C-terminus: Putative universal stress protein SH1215 (165 aa).

The protein belongs to the universal stress protein A family.

The protein localises to the cytoplasm. The chain is Putative universal stress protein SH1215 from Staphylococcus haemolyticus (strain JCSC1435).